The primary structure comprises 450 residues: Phosphoglucosamine mutase (450 aa).

S102 serves as the catalytic Phosphoserine intermediate. Mg(2+) contacts are provided by S102, D242, D244, and D246. The residue at position 102 (S102) is a Phosphoserine.

This sequence belongs to the phosphohexose mutase family. Mg(2+) is required as a cofactor. Post-translationally, activated by phosphorylation.

The catalysed reaction is alpha-D-glucosamine 1-phosphate = D-glucosamine 6-phosphate. Its function is as follows. Catalyzes the conversion of glucosamine-6-phosphate to glucosamine-1-phosphate. The polypeptide is Phosphoglucosamine mutase (Staphylococcus haemolyticus (strain JCSC1435)).